The following is a 75-amino-acid chain: Large ribosomal subunit protein bL31 (75 aa).

It belongs to the bacterial ribosomal protein bL31 family. Type A subfamily. In terms of assembly, part of the 50S ribosomal subunit.

In terms of biological role, binds the 23S rRNA. This is Large ribosomal subunit protein bL31 from Chlorobium luteolum (strain DSM 273 / BCRC 81028 / 2530) (Pelodictyon luteolum).